Reading from the N-terminus, the 762-residue chain is 5-methyltetrahydropteroyltriglutamate--homocysteine methyltransferase (762 aa).

5-methyltetrahydropteroyltri-L-glutamate is bound by residues 16–19 (RELK) and K118. Residues 439-441 (IGS) and E492 each bind L-homocysteine. L-methionine-binding positions include 439–441 (IGS) and E492. 5-methyltetrahydropteroyltri-L-glutamate is bound by residues 523–524 (RC) and W569. Position 607 (D607) interacts with L-homocysteine. D607 is an L-methionine binding site. Residue E613 coordinates 5-methyltetrahydropteroyltri-L-glutamate. Zn(2+) is bound by residues H649, C651, and E673. The Proton donor role is filled by H702. C734 is a binding site for Zn(2+).

It belongs to the vitamin-B12 independent methionine synthase family. Zn(2+) serves as cofactor.

It carries out the reaction 5-methyltetrahydropteroyltri-L-glutamate + L-homocysteine = tetrahydropteroyltri-L-glutamate + L-methionine. The protein operates within amino-acid biosynthesis; L-methionine biosynthesis via de novo pathway; L-methionine from L-homocysteine (MetE route): step 1/1. Functionally, catalyzes the transfer of a methyl group from 5-methyltetrahydrofolate to homocysteine resulting in methionine formation. The sequence is that of 5-methyltetrahydropteroyltriglutamate--homocysteine methyltransferase from Pseudomonas entomophila (strain L48).